A 725-amino-acid polypeptide reads, in one-letter code: Palmitoyltransferase AKR1 (725 aa).

The Cytoplasmic portion of the chain corresponds to 1–303 (MGTIAMASIN…LKDKRSFVTR (303 aa)). 5 ANK repeats span residues 84–113 (EGIT…EINR), 118–147 (SIAT…DPLV), 151–180 (QGYN…PVDV), 184–213 (FGHT…SVHA), and 217–246 (QGFT…DRFA). Residues 304 to 324 (FLFFWPFVLVWAMLVAMSSAP) traverse the membrane as a helical segment. Topologically, residues 325-326 (VY) are lumenal. The helical transmembrane segment at 327–347 (IGVPLGIAAVYAIQWVAQQVL) threads the bilayer. Residues 348–364 (EYAPSDMRHFHKTPWLT) are Cytoplasmic-facing. Residues 365-385 (GIFAATLFWTGVNWLTTVLFA) traverse the membrane as a helical segment. The Lumenal segment spans residues 386-397 (TTLGAPEGKGHG). A helical transmembrane segment spans residues 398–418 (ILNFLFALFFGFTVYFYIASM). Residues 419–495 (RYDPGFVPKM…NCVGINNHRH (77 aa)) are Cytoplasmic-facing. Residues 451 to 501 (NFCVTCMIQTPLRSKHCRRCQRCVAKHDHHCPWVYNCVGINNHRHFFFYLI) form the DHHC domain. Cysteine 481 serves as the catalytic S-palmitoyl cysteine intermediate. A helical membrane pass occupies residues 496-516 (FFFYLISLTMGIVSYDFLLYY). The Lumenal portion of the chain corresponds to 517-547 (YFDTVSKNASETCNVLSPTLCKYINADSYTS). The helical transmembrane segment at 548–568 (ILAIWITMQLLWVTMLLFTQF) threads the bilayer. At 569 to 725 (IQVARAMTTY…YEAVGTEDVV (157 aa)) the chain is on the cytoplasmic side.

The protein belongs to the DHHC palmitoyltransferase family. AKR/ZDHHC17 subfamily.

The protein resides in the early endosome membrane. Its subcellular location is the golgi apparatus membrane. It catalyses the reaction L-cysteinyl-[protein] + hexadecanoyl-CoA = S-hexadecanoyl-L-cysteinyl-[protein] + CoA. Functionally, palmitoyltransferase specific for casein kinase 1. This chain is Palmitoyltransferase AKR1 (AKR1), found in Gibberella zeae (strain ATCC MYA-4620 / CBS 123657 / FGSC 9075 / NRRL 31084 / PH-1) (Wheat head blight fungus).